Reading from the N-terminus, the 148-residue chain is Large ribosomal subunit protein bL9 (148 aa).

This sequence belongs to the bacterial ribosomal protein bL9 family.

Binds to the 23S rRNA. This is Large ribosomal subunit protein bL9 from Bacillus thuringiensis subsp. konkukian (strain 97-27).